A 308-amino-acid chain; its full sequence is Pantothenate kinase (308 aa).

90-97 lines the ATP pocket; that stretch reads GSVAVGKS.

This sequence belongs to the prokaryotic pantothenate kinase family.

The protein localises to the cytoplasm. The catalysed reaction is (R)-pantothenate + ATP = (R)-4'-phosphopantothenate + ADP + H(+). The protein operates within cofactor biosynthesis; coenzyme A biosynthesis; CoA from (R)-pantothenate: step 1/5. The chain is Pantothenate kinase from Sorangium cellulosum (strain So ce56) (Polyangium cellulosum (strain So ce56)).